The primary structure comprises 315 residues: Methionyl-tRNA formyltransferase (315 aa).

Residue 111–114 coordinates (6S)-5,6,7,8-tetrahydrofolate; sequence SLLP.

It belongs to the Fmt family.

The catalysed reaction is L-methionyl-tRNA(fMet) + (6R)-10-formyltetrahydrofolate = N-formyl-L-methionyl-tRNA(fMet) + (6S)-5,6,7,8-tetrahydrofolate + H(+). Attaches a formyl group to the free amino group of methionyl-tRNA(fMet). The formyl group appears to play a dual role in the initiator identity of N-formylmethionyl-tRNA by promoting its recognition by IF2 and preventing the misappropriation of this tRNA by the elongation apparatus. In Chlorobium phaeobacteroides (strain DSM 266 / SMG 266 / 2430), this protein is Methionyl-tRNA formyltransferase.